The sequence spans 395 residues: MAKEIFRRDKPHLNIGTIGHVDHGKTTLTASITKVLAKKGLAVAKEFSSIDNAPEEKERGITINTSHVEYQTEIRHYAHVDCPGHADYVKNMVTGAAQMDGAILVVAATDGPMPQTREHILLARQVGVPNLVVFMNKVDQVDDKEILELVEIEIRELLSKYEYDGENIPIIQGSALGALNGEKKWEKQIETLMKTVDNYIKEPIRNIDKPFLMPIEDVFTITGRGTVATGRIETGTINTGDSIDIIGMGIDKLNSIVTGVEMFRKILDKGQAGDNVGLLLRGIEKKDIRRGMVISKPGYITPHKKFNAQIYILKKEEGGRHTPFHNKYKPQFYLRTTDVTGTIYLLNNLEMVMPGDNISVEVELLQPVAISEGLRFAIREGGRTVGAGQVIKIIE.

Residues 10–204 (KPHLNIGTIG…TVDNYIKEPI (195 aa)) form the tr-type G domain. Residues 19-26 (GHVDHGKT) are G1. GTP is bound at residue 19-26 (GHVDHGKT). Mg(2+) is bound at residue Thr-26. The segment at 60–64 (GITIN) is G2. The G3 stretch occupies residues 81 to 84 (DCPG). Residues 81 to 85 (DCPGH) and 136 to 139 (NKVD) each bind GTP. The segment at 136–139 (NKVD) is G4. The interval 174-176 (SAL) is G5.

Belongs to the TRAFAC class translation factor GTPase superfamily. Classic translation factor GTPase family. EF-Tu/EF-1A subfamily. In terms of assembly, monomer.

Its subcellular location is the cytoplasm. It catalyses the reaction GTP + H2O = GDP + phosphate + H(+). Functionally, GTP hydrolase that promotes the GTP-dependent binding of aminoacyl-tRNA to the A-site of ribosomes during protein biosynthesis. The sequence is that of Elongation factor Tu from Karelsulcia muelleri (strain GWSS) (Sulcia muelleri).